The sequence spans 524 residues: Mitochondrial-processing peptidase subunit alpha (524 aa).

Residues 1 to 32 (MATAVWAAARLLRGSAALCARPKFGSPAHRRF) constitute a mitochondrion transit peptide. N6-succinyllysine is present on K63.

The protein belongs to the peptidase M16 family. In terms of assembly, heterodimer of PMPCA (alpha) and PMPCB (beta) subunits, forming the mitochondrial processing protease (MPP) in which PMPCA is involved in substrate recognition and binding and PMPCB is the catalytic subunit.

It localises to the mitochondrion matrix. Its subcellular location is the mitochondrion inner membrane. In terms of biological role, substrate recognition and binding subunit of the essential mitochondrial processing protease (MPP), which cleaves the mitochondrial sequence off newly imported precursors proteins. This Rattus norvegicus (Rat) protein is Mitochondrial-processing peptidase subunit alpha (Pmpca).